Here is a 218-residue protein sequence, read N- to C-terminus: Phosphatidylserine decarboxylase proenzyme (218 aa).

S182 (schiff-base intermediate with substrate; via pyruvic acid) is an active-site residue. S182 carries the pyruvic acid (Ser); by autocatalysis modification.

Belongs to the phosphatidylserine decarboxylase family. PSD-A subfamily. Heterodimer of a large membrane-associated beta subunit and a small pyruvoyl-containing alpha subunit. The cofactor is pyruvate. In terms of processing, is synthesized initially as an inactive proenzyme. Formation of the active enzyme involves a self-maturation process in which the active site pyruvoyl group is generated from an internal serine residue via an autocatalytic post-translational modification. Two non-identical subunits are generated from the proenzyme in this reaction, and the pyruvate is formed at the N-terminus of the alpha chain, which is derived from the carboxyl end of the proenzyme. The post-translation cleavage follows an unusual pathway, termed non-hydrolytic serinolysis, in which the side chain hydroxyl group of the serine supplies its oxygen atom to form the C-terminus of the beta chain, while the remainder of the serine residue undergoes an oxidative deamination to produce ammonia and the pyruvoyl prosthetic group on the alpha chain.

The protein resides in the cell membrane. It catalyses the reaction a 1,2-diacyl-sn-glycero-3-phospho-L-serine + H(+) = a 1,2-diacyl-sn-glycero-3-phosphoethanolamine + CO2. It functions in the pathway phospholipid metabolism; phosphatidylethanolamine biosynthesis; phosphatidylethanolamine from CDP-diacylglycerol: step 2/2. Its function is as follows. Catalyzes the formation of phosphatidylethanolamine (PtdEtn) from phosphatidylserine (PtdSer). The polypeptide is Phosphatidylserine decarboxylase proenzyme (Oleidesulfovibrio alaskensis (strain ATCC BAA-1058 / DSM 17464 / G20) (Desulfovibrio alaskensis)).